The following is a 208-amino-acid chain: Octanoyltransferase (208 aa).

Residues 29 to 208 (KTQDELVWLL…KEFNKVFCNC (180 aa)) form the BPL/LPL catalytic domain. Substrate contacts are provided by residues 68–75 (RGGKYTYH), 140–142 (AFG), and 153–155 (GVS). Catalysis depends on Cys-171, which acts as the Acyl-thioester intermediate.

The protein belongs to the LipB family.

The protein localises to the cytoplasm. It catalyses the reaction octanoyl-[ACP] + L-lysyl-[protein] = N(6)-octanoyl-L-lysyl-[protein] + holo-[ACP] + H(+). The protein operates within protein modification; protein lipoylation via endogenous pathway; protein N(6)-(lipoyl)lysine from octanoyl-[acyl-carrier-protein]: step 1/2. In terms of biological role, catalyzes the transfer of endogenously produced octanoic acid from octanoyl-acyl-carrier-protein onto the lipoyl domains of lipoate-dependent enzymes. Lipoyl-ACP can also act as a substrate although octanoyl-ACP is likely to be the physiological substrate. The chain is Octanoyltransferase from Ehrlichia ruminantium (strain Gardel).